We begin with the raw amino-acid sequence, 341 residues long: MDLPLYWTALIAFLIINAMLLTASVLVYAERKISGFIQHRLGPNRVGPAGFLQPFADVVKLLFKEDIIPAQANRFIHALAPTIMVTIAMTVPALIPFARGVVIADIDVGVLAILALTSISVYGITLAGWSSNSKYSLLGGLRSSAQMISYELAMGTAVLSVILQAGSLNVSAIVEAQRDGWAILGWHVFTNPIGALIFIVTAFAETNRLPFDLPEAEQELVGGYHTEYSGMKFGMFFLAEYVNLFVASFVIATLFFGGYLVPFEPLLLKAFPALEGSVLLGLLQFLSLLAKTCFFAFLYIWVRWTFPRFKYNQLMTLGWKYLLPIGLANVILIALGVALFS.

8 helical membrane-spanning segments follow: residues 9–29 (ALIA…LVYA), 75–95 (FIHA…PALI), 108–128 (VGVL…TLAG), 154–174 (MGTA…SAIV), 180–200 (GWAI…IFIV), 244–264 (LFVA…VPFE), 278–298 (VLLG…FAFL), and 321–341 (YLLP…ALFS).

Belongs to the complex I subunit 1 family. As to quaternary structure, NDH-1 is composed of 14 different subunits. Subunits Nqo7-14 constitute the membrane sector of the complex.

The protein localises to the cell inner membrane. It carries out the reaction a quinone + NADH + 5 H(+)(in) = a quinol + NAD(+) + 4 H(+)(out). Functionally, NDH-1 shuttles electrons from NADH, via FMN and iron-sulfur (Fe-S) centers, to quinones in the respiratory chain. The immediate electron acceptor for the enzyme in this species is believed to be menaquinone. Couples the redox reaction to proton translocation (for every two electrons transferred, four hydrogen ions are translocated across the cytoplasmic membrane), and thus conserves the redox energy in a proton gradient. The protein is NADH-quinone oxidoreductase subunit 8 (nqo8) of Rhodothermus marinus (Rhodothermus obamensis).